Here is a 694-residue protein sequence, read N- to C-terminus: Polyribonucleotide nucleotidyltransferase (694 aa).

2 residues coordinate Mg(2+): Asp485 and Asp491. The region spanning 552-611 (PRIETMQIKPNKIATVIGPGGKQIRQIIEEAGVQIDINDSGLVSISASSPQAIEKAKSII) is the KH domain. Residues 621–689 (GKIYEGRVTS…EKGQYKLSHK (69 aa)) form the S1 motif domain.

Belongs to the polyribonucleotide nucleotidyltransferase family. Mg(2+) is required as a cofactor.

The protein localises to the cytoplasm. It carries out the reaction RNA(n+1) + phosphate = RNA(n) + a ribonucleoside 5'-diphosphate. Its function is as follows. Involved in mRNA degradation. Catalyzes the phosphorolysis of single-stranded polyribonucleotides processively in the 3'- to 5'-direction. The polypeptide is Polyribonucleotide nucleotidyltransferase (Chlamydia abortus (strain DSM 27085 / S26/3) (Chlamydophila abortus)).